We begin with the raw amino-acid sequence, 307 residues long: Thiohydrolase apmlB (307 aa).

Belongs to the polyketide transferase af380 family.

Functionally, thiohydrolase; part of the gene cluster that mediates the biosynthesis of phaeospelide A, a fungal polyene macrolide with a 34-membered macrolactone ring and an all-trans conjugated hexaene structure. The HR-PKS ApmlA uses acetyl-CoA and malonyl-CoA as its starter and extender units, respectively, and provides the large carbon framework in phaeospelide via 16 cycles of polyketide chain elongation, which is the largest number identified in fungal iterative PKSs thus far. During round 1, the KR domain reduces beta -ketone to an L-oriented hydroxy group, while during later rounds, it provides hydroxy groups in the D-configuration. The characteristic conjugated hexaene moiety is built during the later rounds (10-15), when the KR and DH domains are at work but ER is off. Phylogenetic analysis of the DH domain suggests that a polyene formation is programmed in the DH domain. Finally, the mature ACP-tethered carbon chain is transferred to the serine residue of the thiohydrolase apmlB, followed by intramolecular macrolactonization, generating phaeospelide A. When one elongation cycle during rounds 7-9 is skipped, phaeospelide B is biosynthesized instead. The polypeptide is Thiohydrolase apmlB (Arthrinium phaeospermum (Gymnosporium phaeospermum)).